Consider the following 37-residue polypeptide: Large ribosomal subunit protein bL36c (37 aa).

The protein belongs to the bacterial ribosomal protein bL36 family.

The protein localises to the plastid. The protein resides in the chloroplast. This Cycas taitungensis (Prince sago) protein is Large ribosomal subunit protein bL36c.